The chain runs to 1791 residues: Protein TIC 214 (1791 aa).

6 helical membrane-spanning segments follow: residues 19-39 (IINS…FSIG), 68-88 (FIAG…HLAL), 91-111 (PHTI…WNNH), 133-153 (VFLN…SSML), 176-196 (VGWL…LVWI), and 230-250 (IFSI…PSPI). The segment covering 257 to 271 (GTSETEERGGTKQDQ) has biased composition (basic and acidic residues). 2 disordered regions span residues 257–278 (GTSE…TEEA) and 1498–1521 (ADQG…PNQE).

Belongs to the TIC214 family. In terms of assembly, part of the Tic complex.

It localises to the plastid. The protein localises to the chloroplast inner membrane. Involved in protein precursor import into chloroplasts. May be part of an intermediate translocation complex acting as a protein-conducting channel at the inner envelope. This Aethionema grandiflorum (Persian stone-cress) protein is Protein TIC 214.